The sequence spans 560 residues: 2-succinyl-5-enolpyruvyl-6-hydroxy-3-cyclohexene-1-carboxylate synthase (560 aa).

The protein belongs to the TPP enzyme family. MenD subfamily. In terms of assembly, homodimer. Mg(2+) serves as cofactor. The cofactor is Mn(2+). Requires thiamine diphosphate as cofactor.

The catalysed reaction is isochorismate + 2-oxoglutarate + H(+) = 5-enolpyruvoyl-6-hydroxy-2-succinyl-cyclohex-3-ene-1-carboxylate + CO2. Its pathway is quinol/quinone metabolism; 1,4-dihydroxy-2-naphthoate biosynthesis; 1,4-dihydroxy-2-naphthoate from chorismate: step 2/7. It participates in quinol/quinone metabolism; menaquinone biosynthesis. Functionally, catalyzes the thiamine diphosphate-dependent decarboxylation of 2-oxoglutarate and the subsequent addition of the resulting succinic semialdehyde-thiamine pyrophosphate anion to isochorismate to yield 2-succinyl-5-enolpyruvyl-6-hydroxy-3-cyclohexene-1-carboxylate (SEPHCHC). The chain is 2-succinyl-5-enolpyruvyl-6-hydroxy-3-cyclohexene-1-carboxylate synthase from Pectobacterium atrosepticum (strain SCRI 1043 / ATCC BAA-672) (Erwinia carotovora subsp. atroseptica).